Consider the following 312-residue polypeptide: Ribosomal protein L11 methyltransferase (312 aa).

S-adenosyl-L-methionine-binding residues include T162, G183, D205, and N248.

Belongs to the methyltransferase superfamily. PrmA family.

It localises to the cytoplasm. The catalysed reaction is L-lysyl-[protein] + 3 S-adenosyl-L-methionine = N(6),N(6),N(6)-trimethyl-L-lysyl-[protein] + 3 S-adenosyl-L-homocysteine + 3 H(+). Methylates ribosomal protein L11. In Bacillus cereus (strain Q1), this protein is Ribosomal protein L11 methyltransferase.